A 304-amino-acid chain; its full sequence is UDP-3-O-acyl-N-acetylglucosamine deacetylase (304 aa).

Zn(2+)-binding residues include His79, His238, and Asp242. Residue His265 is the Proton donor of the active site.

Belongs to the LpxC family. Zn(2+) serves as cofactor.

It carries out the reaction a UDP-3-O-[(3R)-3-hydroxyacyl]-N-acetyl-alpha-D-glucosamine + H2O = a UDP-3-O-[(3R)-3-hydroxyacyl]-alpha-D-glucosamine + acetate. It participates in glycolipid biosynthesis; lipid IV(A) biosynthesis; lipid IV(A) from (3R)-3-hydroxytetradecanoyl-[acyl-carrier-protein] and UDP-N-acetyl-alpha-D-glucosamine: step 2/6. Functionally, catalyzes the hydrolysis of UDP-3-O-myristoyl-N-acetylglucosamine to form UDP-3-O-myristoylglucosamine and acetate, the committed step in lipid A biosynthesis. The protein is UDP-3-O-acyl-N-acetylglucosamine deacetylase of Chromobacterium violaceum (strain ATCC 12472 / DSM 30191 / JCM 1249 / CCUG 213 / NBRC 12614 / NCIMB 9131 / NCTC 9757 / MK).